Consider the following 83-residue polypeptide: MLRNLLALRQIAKRTISTSSRRQFENKVPEKQKLFQEDNGIPVHLKGGIADALLYRATLILTVGGTAYAMYELAVASFPKKQD.

The transit peptide at 1 to 23 (MLRNLLALRQIAKRTISTSSRRQ) directs the protein to the mitochondrion. The Mitochondrial matrix segment spans residues 24–48 (FENKVPEKQKLFQEDNGIPVHLKGG). K33 is subject to N6-acetyllysine. Residues 49-77 (IADALLYRATLILTVGGTAYAMYELAVAS) form a helical membrane-spanning segment. Over 78-83 (FPKKQD) the chain is Mitochondrial intermembrane.

Belongs to the cytochrome c oxidase VIIa family. In terms of assembly, component of the cytochrome c oxidase (complex IV, CIV), a multisubunit enzyme composed of 14 subunits. The complex is composed of a catalytic core of 3 subunits MT-CO1, MT-CO2 and MT-CO3, encoded in the mitochondrial DNA, and 11 supernumerary subunits COX4I1 (or COX4I2), COX5A, COX5B, COX6A2 (or COX6A1), COX6B1 (or COX6B2), COX6C, COX7A1 (or COX7A2), COX7B, COX7C, COX8B and NDUFA4, which are encoded in the nuclear genome. The complex exists as a monomer or a dimer and forms supercomplexes (SCs) in the inner mitochondrial membrane with NADH-ubiquinone oxidoreductase (complex I, CI) and ubiquinol-cytochrome c oxidoreductase (cytochrome b-c1 complex, complex III, CIII), resulting in different assemblies (supercomplex SCI(1)III(2)IV(1) and megacomplex MCI(2)III(2)IV(2)). Interacts with PET100.

The protein localises to the mitochondrion inner membrane. The protein operates within energy metabolism; oxidative phosphorylation. Functionally, component of the cytochrome c oxidase, the last enzyme in the mitochondrial electron transport chain which drives oxidative phosphorylation. The respiratory chain contains 3 multisubunit complexes succinate dehydrogenase (complex II, CII), ubiquinol-cytochrome c oxidoreductase (cytochrome b-c1 complex, complex III, CIII) and cytochrome c oxidase (complex IV, CIV), that cooperate to transfer electrons derived from NADH and succinate to molecular oxygen, creating an electrochemical gradient over the inner membrane that drives transmembrane transport and the ATP synthase. Cytochrome c oxidase is the component of the respiratory chain that catalyzes the reduction of oxygen to water. Electrons originating from reduced cytochrome c in the intermembrane space (IMS) are transferred via the dinuclear copper A center (CU(A)) of subunit 2 and heme A of subunit 1 to the active site in subunit 1, a binuclear center (BNC) formed by heme A3 and copper B (CU(B)). The BNC reduces molecular oxygen to 2 water molecules using 4 electrons from cytochrome c in the IMS and 4 protons from the mitochondrial matrix. The chain is Cytochrome c oxidase subunit 7A2, mitochondrial (COX7A2) from Bos taurus (Bovine).